A 399-amino-acid polypeptide reads, in one-letter code: Salivary protein Tsal1 (399 aa).

A signal peptide spans Met-1–Ala-22. Asn-268 is a glycosylation site (N-linked (GlcNAc...) asparagine).

Belongs to the DNA/RNA non-specific endonuclease family. The cofactor is a divalent metal cation. In terms of tissue distribution, saliva (at protein level).

Its subcellular location is the secreted. Its function is as follows. Binds double-stranded DNA (dsDNA) with high affinity. Binds double-stranded RNA. Binds single-stranded DNA with lower affinity and with a preference for purine-rich sequences. Shows residual nuclease activity for dsDNA. May facilitate blood meal intake by lowering the local viscosity created by the release of host DNA. This chain is Salivary protein Tsal1, found in Glossina morsitans morsitans (Savannah tsetse fly).